The sequence spans 245 residues: Carboxymethylenebutenolidase homolog (245 aa).

N-acetylalanine is present on Ala-2. Catalysis depends on residues Cys-132, Asp-179, and His-212. Phosphoserine is present on Ser-223.

This sequence belongs to the dienelactone hydrolase family.

Its subcellular location is the cytoplasm. It localises to the cytosol. Functionally, cysteine hydrolase. This Rattus norvegicus (Rat) protein is Carboxymethylenebutenolidase homolog (Cmbl).